We begin with the raw amino-acid sequence, 388 residues long: uncharacterized protein (388 aa).

Residues 68–96 adopt a coiled-coil conformation; it reads KVDRMSEEEERMAIATRKAKEVAKELSET. Residues 162–388 form a disordered region; sequence GSHPLVREFN…PPQQDWFDSV (227 aa). 2 stretches are compositionally biased toward basic and acidic residues: residues 166–176 and 196–208; these read LVREFNGEKPP and ATDKKTGSKQSDK. The span at 233-251 shows a compositional bias: basic residues; that stretch reads GVKHQHAIRRDDRHRHGMR. 2 stretches are compositionally biased toward low complexity: residues 265–279 and 293–346; these read QQQQCPVQGQQSRGQ and QRRP…QRPA.

This is an uncharacterized protein from Frog virus 3 (isolate Goorha) (FV-3).